The primary structure comprises 2241 residues: Little elongation complex subunit 1 (2241 aa).

Residues 22 to 185 (CASLQQNLNE…KQKNEKELRH (164 aa)) adopt a coiled-coil conformation. 2 stretches are compositionally biased toward basic and acidic residues: residues 222 to 233 (GEGGRRIPEKPA) and 296 to 315 (AFCE…DGNR). Disordered regions lie at residues 222–255 (GEGG…GGPA), 273–315 (GDFS…DGNR), and 368–387 (GEFT…SMES). Position 523 is a phosphoserine (Ser523). A disordered region spans residues 552–590 (EFSKRTLTDGSASKSPCVTGSGRFQRRERDVRESTPQSG). Over residues 559 to 569 (TDGSASKSPCV) the composition is skewed to polar residues. A Phosphoserine modification is found at Ser676. A disordered region spans residues 703 to 817 (TAKGHSLPQS…PSGESTIPPE (115 aa)). Residues 718–728 (TGGGQCKGRGP) show a composition bias toward gly residues. A compositionally biased stretch (polar residues) spans 738–760 (DWTSLARSQAGFTRRSSGSADST). The residue at position 803 (Thr803) is a Phosphothreonine. At Ser896 the chain carries Phosphoserine. The interval 971 to 1119 (SGVTSGVFPA…VGEAGHPSDV (149 aa)) is disordered. Residues 1065-1074 (EEDTEVEDEA) show a composition bias toward acidic residues. The segment covering 1091 to 1104 (RQQEQAEDSHRPLG) has biased composition (basic and acidic residues). The residue at position 1189 (Lys1189) is an N6-acetyllysine. Disordered stretches follow at residues 1231 to 1328 (SDVL…CLSI), 1419 to 1475 (ASSQ…KSRL), and 1543 to 1671 (VHLN…AAAS). Positions 1252–1266 (DTEHALLESTHHSQA) are enriched in basic and acidic residues. Residues 1460 to 1470 (DISSNGQSANF) show a composition bias toward polar residues. Phosphoserine occurs at positions 1553 and 1582. Residues 1574 to 1585 (DRSTPTNCSPDT) are compositionally biased toward polar residues. The segment covering 1595–1606 (PPLPPLLPPLIA) has biased composition (pro residues). A Phosphothreonine modification is found at Thr1607. A phosphoserine mark is found at Ser1657, Ser1662, Ser1664, Ser1666, and Ser1677. 2 disordered regions span residues 1777 to 1800 (GSSG…AGGK) and 1812 to 1843 (KRLR…GSPL). Residues 1781-1794 (ADGSQGKSQDSGVQ) show a composition bias toward polar residues. Residues 1814–1829 (LRLDNKSPEPDTREVT) show a composition bias toward basic and acidic residues. Ser1820 carries the post-translational modification Phosphoserine.

It belongs to the ICE1 family. As to quaternary structure, component of the little elongation complex (LEC), at least composed of ELL (ELL, ELL2 or ELL3), ZC3H8, ICE1 and ICE2. Interacts (via N-terminus domain) with ELL. Interacts (via C-terminus domain) with ICE2 and ZC3H8.

It is found in the nucleus. The protein localises to the cajal body. Its function is as follows. Component of the little elongation complex (LEC), a complex required to regulate small nuclear RNA (snRNA) gene transcription by RNA polymerase II and III. Specifically acts as a scaffold protein that promotes the LEC complex formation and recruitment and RNA polymerase II occupancy at snRNA genes in subnuclear bodies. The polypeptide is Little elongation complex subunit 1 (Ice1) (Mus musculus (Mouse)).